The sequence spans 139 residues: Small ribosomal subunit protein uS12 (139 aa).

3-methylthioaspartic acid is present on D102. Residues 116–139 (DTTGVAKRSQGRSKYGAKRPKKSK) are disordered. A compositionally biased stretch (basic residues) spans 124 to 139 (SQGRSKYGAKRPKKSK).

It belongs to the universal ribosomal protein uS12 family. In terms of assembly, part of the 30S ribosomal subunit. Contacts proteins S8 and S17. May interact with IF1 in the 30S initiation complex.

With S4 and S5 plays an important role in translational accuracy. In terms of biological role, interacts with and stabilizes bases of the 16S rRNA that are involved in tRNA selection in the A site and with the mRNA backbone. Located at the interface of the 30S and 50S subunits, it traverses the body of the 30S subunit contacting proteins on the other side and probably holding the rRNA structure together. The combined cluster of proteins S8, S12 and S17 appears to hold together the shoulder and platform of the 30S subunit. The polypeptide is Small ribosomal subunit protein uS12 (Mesomycoplasma hyopneumoniae (strain 7448) (Mycoplasma hyopneumoniae)).